The primary structure comprises 180 residues: Inner membrane-spanning protein YciB (180 aa).

The next 6 helical transmembrane spans lie at 4-24 (LLSE…GGGI), 25-45 (QHAT…CYVI), 52-72 (LSII…ISGN), 76-96 (IKIK…MSGI), 118-138 (ITLS…NEVV), and 150-170 (FKVF…LPLL).

The protein belongs to the YciB family.

It localises to the cell inner membrane. Functionally, plays a role in cell envelope biogenesis, maintenance of cell envelope integrity and membrane homeostasis. This is Inner membrane-spanning protein YciB from Rickettsia massiliae (strain Mtu5).